The chain runs to 267 residues: Phosphonates import ATP-binding protein PhnC 2 (267 aa).

An ABC transporter domain is found at 3–247 (LSLDGVDLVH…ALDALYANEQ (245 aa)). 36-43 (GPSGAGKT) is a binding site for ATP.

The protein belongs to the ABC transporter superfamily. Phosphonates importer (TC 3.A.1.9.1) family. The complex is composed of two ATP-binding proteins (PhnC), two transmembrane proteins (PhnE) and a solute-binding protein (PhnD).

It is found in the cell inner membrane. The catalysed reaction is phosphonate(out) + ATP + H2O = phosphonate(in) + ADP + phosphate + H(+). Its function is as follows. Part of the ABC transporter complex PhnCDE involved in phosphonates import. Responsible for energy coupling to the transport system. This chain is Phosphonates import ATP-binding protein PhnC 2, found in Pseudomonas aeruginosa (strain UCBPP-PA14).